A 148-amino-acid chain; its full sequence is UPF0179 protein UNCMA_27840 (148 aa).

This sequence belongs to the UPF0179 family.

This is UPF0179 protein UNCMA_27840 from Methanocella arvoryzae (strain DSM 22066 / NBRC 105507 / MRE50).